Consider the following 257-residue polypeptide: Adenosylcobinamide-GDP ribazoletransferase (257 aa).

A run of 4 helical transmembrane segments spans residues 28–48 (FARS…LVAL), 50–70 (LFVP…VYAV), 110–130 (VALA…VEVA), and 199–219 (WPQV…AALV).

Belongs to the CobS family. The cofactor is Mg(2+).

The protein localises to the cell membrane. It carries out the reaction alpha-ribazole + adenosylcob(III)inamide-GDP = adenosylcob(III)alamin + GMP + H(+). The enzyme catalyses alpha-ribazole 5'-phosphate + adenosylcob(III)inamide-GDP = adenosylcob(III)alamin 5'-phosphate + GMP + H(+). The protein operates within cofactor biosynthesis; adenosylcobalamin biosynthesis; adenosylcobalamin from cob(II)yrinate a,c-diamide: step 7/7. In terms of biological role, joins adenosylcobinamide-GDP and alpha-ribazole to generate adenosylcobalamin (Ado-cobalamin). Also synthesizes adenosylcobalamin 5'-phosphate from adenosylcobinamide-GDP and alpha-ribazole 5'-phosphate. This Halorubrum lacusprofundi (strain ATCC 49239 / DSM 5036 / JCM 8891 / ACAM 34) protein is Adenosylcobinamide-GDP ribazoletransferase.